A 711-amino-acid polypeptide reads, in one-letter code: Protein ACTIVITY OF BC1 COMPLEX KINASE 3, chloroplastic (711 aa).

Residues methionine 1–arginine 42 constitute a chloroplast transit peptide. Positions serine 216–phenylalanine 546 constitute a Protein kinase domain. ATP is bound by residues isoleucine 222–valine 230 and lysine 245. Aspartate 379 (proton acceptor) is an active-site residue.

The protein belongs to the protein kinase superfamily. ADCK protein kinase family. In terms of assembly, interacts with ABC1K1 in plastoglobules (PG). Interacts with PGM48.

It localises to the plastid. The protein resides in the chloroplast. It is found in the plastoglobule. The enzyme catalyses L-seryl-[protein] + ATP = O-phospho-L-seryl-[protein] + ADP + H(+). The catalysed reaction is L-threonyl-[protein] + ATP = O-phospho-L-threonyl-[protein] + ADP + H(+). Kinase that can phosphorylate the tocopherol cyclase VTE1, a key enzyme of tocopherol (vitamin E) metabolism and involved in the recycling of oxidated alpha-tocopherol quinone, possibly stabilizing it at plastoglobules. Also regulates membrane prenylquinone composition. Required for photooxidative stress responses to prevent photosystem II core and chlorophyll degradations. Together with ABC1K1, contributes to plastoglobule (PG) function in prenyl-lipid metabolism, stress response, and thylakoid remodeling. Promotes photodamage of chloroplasts under continuous red light, thus working in opposition to ABC1K1. The polypeptide is Protein ACTIVITY OF BC1 COMPLEX KINASE 3, chloroplastic (Arabidopsis thaliana (Mouse-ear cress)).